A 317-amino-acid polypeptide reads, in one-letter code: Acetyl-coenzyme A carboxylase carboxyl transferase subunit alpha (317 aa).

One can recognise a CoA carboxyltransferase C-terminal domain in the interval 37–292 (QISQKLEDTK…EEYILKAFNE (256 aa)).

It belongs to the AccA family. Acetyl-CoA carboxylase is a heterohexamer composed of biotin carboxyl carrier protein (AccB), biotin carboxylase (AccC) and two subunits each of ACCase subunit alpha (AccA) and ACCase subunit beta (AccD).

The protein resides in the cytoplasm. It carries out the reaction N(6)-carboxybiotinyl-L-lysyl-[protein] + acetyl-CoA = N(6)-biotinyl-L-lysyl-[protein] + malonyl-CoA. Its pathway is lipid metabolism; malonyl-CoA biosynthesis; malonyl-CoA from acetyl-CoA: step 1/1. Component of the acetyl coenzyme A carboxylase (ACC) complex. First, biotin carboxylase catalyzes the carboxylation of biotin on its carrier protein (BCCP) and then the CO(2) group is transferred by the carboxyltransferase to acetyl-CoA to form malonyl-CoA. This is Acetyl-coenzyme A carboxylase carboxyl transferase subunit alpha from Flavobacterium psychrophilum (strain ATCC 49511 / DSM 21280 / CIP 103535 / JIP02/86).